A 174-amino-acid polypeptide reads, in one-letter code: Protein COFACTOR ASSEMBLY OF COMPLEX C SUBUNIT B CCB3, chloroplastic (174 aa).

The transit peptide at 1–39 (MTTVTTSFVSFSPALMIFQKKSRRSSPNFRNRSTSLPIV) directs the protein to the chloroplast. Topologically, residues 40 to 78 (SATLSHIEEAATTTNLIRQTNSISESLRNISLADLDPGT) are lumenal. Residues 79–99 (AKLAIGILGPALSAFGFLFIL) traverse the membrane as a helical segment. At 100–147 (RIVMSWYPKLPVDKFPYVLAYAPTEPILVQTRKVIPPLAGVDVTPVVW) the chain is on the stromal side. Residues 148 to 168 (FGLVSFLSEILVGPQGLLVLV) traverse the membrane as a helical segment. Topologically, residues 169–174 (SQQQVN) are lumenal.

The protein belongs to the YggT family.

It localises to the plastid. The protein resides in the chloroplast thylakoid membrane. Functionally, required for the biogenesis and accumulation of native cytochrome b6 in the thylakoid membrane. Controls the conversion of apocytochrome b6 to holocytochrome b6. Required for covalent binding of the c-type heme to cytochrome b6. This is Protein COFACTOR ASSEMBLY OF COMPLEX C SUBUNIT B CCB3, chloroplastic from Arabidopsis thaliana (Mouse-ear cress).